The following is a 533-amino-acid chain: Peptide chain release factor 3 (533 aa).

The tr-type G domain occupies 11–284; that stretch reads RRRRTFAIIS…ALVGLSPEPL (274 aa). Residues 20 to 27, 92 to 96, and 146 to 149 contribute to the GTP site; these read SHPDAGKT, DTPGH, and NKLD.

Belongs to the TRAFAC class translation factor GTPase superfamily. Classic translation factor GTPase family. PrfC subfamily.

It is found in the cytoplasm. Its function is as follows. Increases the formation of ribosomal termination complexes and stimulates activities of RF-1 and RF-2. It binds guanine nucleotides and has strong preference for UGA stop codons. It may interact directly with the ribosome. The stimulation of RF-1 and RF-2 is significantly reduced by GTP and GDP, but not by GMP. The chain is Peptide chain release factor 3 from Ralstonia nicotianae (strain ATCC BAA-1114 / GMI1000) (Ralstonia solanacearum).